Consider the following 224-residue polypeptide: Glycerol-3-phosphate acyltransferase (224 aa).

A run of 6 helical transmembrane segments spans residues 14–34, 70–90, 99–119, 129–149, 162–182, and 185–205; these read INMI…GWLL, YLSI…VLGA, TQWS…YLGF, IGSV…IWGI, LIGV…LPLP, and ISII…LFIF.

It belongs to the PlsY family. In terms of assembly, probably interacts with PlsX.

Its subcellular location is the cell inner membrane. It carries out the reaction an acyl phosphate + sn-glycerol 3-phosphate = a 1-acyl-sn-glycero-3-phosphate + phosphate. The protein operates within lipid metabolism; phospholipid metabolism. Its function is as follows. Catalyzes the transfer of an acyl group from acyl-phosphate (acyl-PO(4)) to glycerol-3-phosphate (G3P) to form lysophosphatidic acid (LPA). This enzyme utilizes acyl-phosphate as fatty acyl donor, but not acyl-CoA or acyl-ACP. The polypeptide is Glycerol-3-phosphate acyltransferase (Helicobacter hepaticus (strain ATCC 51449 / 3B1)).